The chain runs to 271 residues: MTSLTSADALTLYGETFASRVLIGTSRYPSLQSLSDSIAASRPGMVTVALRRQMTGGTAEAGFFDLLKRHAVPLLPNTAGCQTVAEAVTTAHMAREVFGTDWIKLELIGDDYTLQPDPVGLIEAAAQLVKDGFKVLPYCTEDLVIGRRLLDVGCEALMPWGAPIGTGKGVVNPYGLRVLRERLPDVPLIVDAGLGVPSHACQVMEWGFDGVLLNTAVSQATHPEIMARAFAQGVEAGRAAYLAGPMDARETAHASTPVVGMPFWHQDGGGA.

K104 functions as the Schiff-base intermediate with DXP in the catalytic mechanism. Residues G165, 192–193 (AG), and 214–215 (NT) contribute to the 1-deoxy-D-xylulose 5-phosphate site.

Belongs to the ThiG family. Homotetramer. Forms heterodimers with either ThiH or ThiS.

The protein resides in the cytoplasm. The catalysed reaction is [ThiS sulfur-carrier protein]-C-terminal-Gly-aminoethanethioate + 2-iminoacetate + 1-deoxy-D-xylulose 5-phosphate = [ThiS sulfur-carrier protein]-C-terminal Gly-Gly + 2-[(2R,5Z)-2-carboxy-4-methylthiazol-5(2H)-ylidene]ethyl phosphate + 2 H2O + H(+). It participates in cofactor biosynthesis; thiamine diphosphate biosynthesis. Its function is as follows. Catalyzes the rearrangement of 1-deoxy-D-xylulose 5-phosphate (DXP) to produce the thiazole phosphate moiety of thiamine. Sulfur is provided by the thiocarboxylate moiety of the carrier protein ThiS. In vitro, sulfur can be provided by H(2)S. The protein is Thiazole synthase of Burkholderia lata (strain ATCC 17760 / DSM 23089 / LMG 22485 / NCIMB 9086 / R18194 / 383).